Reading from the N-terminus, the 1012-residue chain is Retinoblastoma-related protein (1012 aa).

The interval 403–604 is domain A; the sequence is TPVSTAMTTA…EKGSSMDNSL (202 aa). A pocket region spans residues 403-863; sequence TPVSTAMTTA…NEVFIPSVKP (461 aa). Residues 605-723 form a spacer region; that stretch reads IIARPALSAG…PGGGGETCAE (119 aa). Residues 724–863 are domain B; it reads TGINIFFSKI…NEVFIPSVKP (140 aa). A disordered region spans residues 884-905; that stretch reads NNDKDGQCPGSPKLSTFPSLPD.

Belongs to the retinoblastoma protein (RB) family.

It is found in the nucleus. Regulator of biological processes that recruits a histone deacetylase to control gene transcription. May play a role in the entry into mitosis, negatively regulating the cell proliferation. Formation of stable complexes with geminiviridae replication-associated proteins may create a cellular environment which favors viral DNA replication. This chain is Retinoblastoma-related protein (RB), found in Oxybasis rubra (Red goosefoot).